The sequence spans 690 residues: MTKKILLIEIGTEELPARLLSKISLYFYKNFIKELDFHNISYKNIKYFSTPRRLALKIKDIDITERFVEIKKRGPSIINSYDKDGFLTEAATRWLKHCGININQAIRLKNEKGEWLFYKTRKKQENIESLIPKITESALKNISIKKSMRWGQDNQKFSRPIRNIVILLDKKVIPGDVFNITSKNLLQNHLSSKDSQIKIKDAKDYPKILLEKNNIIADYFIRKEKIIEDIENIAKKIKGFIKKNNVLIEEVTALVESPKALLVNFQEKFLQIPKKILINTIEKKQKCFPIYNSEKKLLPYFIFISNIQTQESEKIIIGNQRVMHARLSDAEFFFKNDRKVKLESRLLSLKKVLFQNNLGSLYEKTLRIKLLIKWIAKYSSSDVEDSIRAALLSKCDLVTDVVCEFPELQGKIGMYYALEDKEKKDVATALEEQYLPRFSGDKLPCTPIGCGLSIADKMDTLSGMFYIGNIPSSDKDPFALRRLAIGIIRIILEKNIPLNLEDLIKKSLSLYNKKNEDDLILFDKMIKFFMIRLFHWYEETGYSAKIIKSVLSCKSIELIDIHKKIQAISFFKKLKDSQSIILSIKRISNILAKEKEKINGDINKKLMIEKEEIILFNNIEEFDNYTKNLFLEKKYNDILIKIKSFENPIYNFFKKVKIYHSDSKIRLNRLLLLSKLKKIFFKIADFSYLY.

It belongs to the class-II aminoacyl-tRNA synthetase family. Tetramer of two alpha and two beta subunits.

It is found in the cytoplasm. It catalyses the reaction tRNA(Gly) + glycine + ATP = glycyl-tRNA(Gly) + AMP + diphosphate. The chain is Glycine--tRNA ligase beta subunit from Buchnera aphidicola subsp. Acyrthosiphon pisum (strain 5A).